We begin with the raw amino-acid sequence, 201 residues long: 3-isopropylmalate dehydratase small subunit (201 aa).

It belongs to the LeuD family. LeuD type 1 subfamily. In terms of assembly, heterodimer of LeuC and LeuD.

The catalysed reaction is (2R,3S)-3-isopropylmalate = (2S)-2-isopropylmalate. It functions in the pathway amino-acid biosynthesis; L-leucine biosynthesis; L-leucine from 3-methyl-2-oxobutanoate: step 2/4. Functionally, catalyzes the isomerization between 2-isopropylmalate and 3-isopropylmalate, via the formation of 2-isopropylmaleate. This Parvibaculum lavamentivorans (strain DS-1 / DSM 13023 / NCIMB 13966) protein is 3-isopropylmalate dehydratase small subunit.